A 443-amino-acid polypeptide reads, in one-letter code: COP9 signalosome complex subunit 2 (443 aa).

The tract at residues 1–275 is mediates interaction with NIF3L1; it reads MSDMEDDFMC…DESGSPRRTT (275 aa). A PCI domain is found at 254–416; that stretch reads AHTDFFEAFK…QLLELDHQKR (163 aa).

It belongs to the CSN2 family. In terms of assembly, component of the CSN complex, composed of COPS1/GPS1, COPS2, COPS3, COPS4, COPS5, COPS6, COPS7 (COPS7A or COPS7B), COPS8 and COPS9 isoform 1. In the complex, it probably interacts directly with COPS1, COPS4, COPS5, COPS6 and COPS7 (COPS7A or COPS7B). Specifically interacts with the ligand binding domain of the thyroid receptor (TR). Does not require the presence of thyroid hormone for its interaction. Interacts with CUL1 and CUL2. Interacts with IRF8/ICSBP1 and with nuclear receptors NR2F1 and NR0B1. Interacts with NIF3L1. Phosphorylated by CK2 and PKD kinases.

It is found in the cytoplasm. The protein resides in the nucleus. Functionally, essential component of the COP9 signalosome complex (CSN), a complex involved in various cellular and developmental processes. The CSN complex is an essential regulator of the ubiquitin (Ubl) conjugation pathway by mediating the deneddylation of the cullin subunits of SCF-type E3 ligase complexes, leading to decrease the Ubl ligase activity of SCF-type complexes such as SCF, CSA or DDB2. The complex is also involved in phosphorylation of p53/TP53, c-jun/JUN, IkappaBalpha/NFKBIA, ITPK1 and IRF8/ICSBP, possibly via its association with CK2 and PKD kinases. CSN-dependent phosphorylation of TP53 and JUN promotes and protects degradation by the Ubl system, respectively. Involved in early stage of neuronal differentiation via its interaction with NIF3L1. This chain is COP9 signalosome complex subunit 2 (COPS2), found in Homo sapiens (Human).